The chain runs to 208 residues: Protein GrpE (208 aa).

Residues 1-12 (MTNKDESVEKNT) are compositionally biased toward basic and acidic residues. The disordered stretch occupies residues 1-51 (MTNKDESVEKNTESTVEETNVKQNIDDSVEQAEESKGHLQDEAIEETSDEN). The segment covering 13 to 23 (ESTVEETNVKQ) has biased composition (polar residues). Residues 42–51 (EAIEETSDEN) are compositionally biased toward acidic residues.

Belongs to the GrpE family. Homodimer.

It localises to the cytoplasm. Its function is as follows. Participates actively in the response to hyperosmotic and heat shock by preventing the aggregation of stress-denatured proteins, in association with DnaK and GrpE. It is the nucleotide exchange factor for DnaK and may function as a thermosensor. Unfolded proteins bind initially to DnaJ; upon interaction with the DnaJ-bound protein, DnaK hydrolyzes its bound ATP, resulting in the formation of a stable complex. GrpE releases ADP from DnaK; ATP binding to DnaK triggers the release of the substrate protein, thus completing the reaction cycle. Several rounds of ATP-dependent interactions between DnaJ, DnaK and GrpE are required for fully efficient folding. In Staphylococcus aureus (strain USA300), this protein is Protein GrpE.